Reading from the N-terminus, the 62-residue chain is Large ribosomal subunit protein bL28 (62 aa).

It belongs to the bacterial ribosomal protein bL28 family.

The polypeptide is Large ribosomal subunit protein bL28 (Acidothermus cellulolyticus (strain ATCC 43068 / DSM 8971 / 11B)).